We begin with the raw amino-acid sequence, 165 residues long: SsrA-binding protein (165 aa).

Basic residues predominate over residues 1 to 10 (MSKKGKKKSK). Residues 1-21 (MSKKGKKKSKNNSSVDGNRRL) form a disordered region.

Belongs to the SmpB family.

Its subcellular location is the cytoplasm. In terms of biological role, required for rescue of stalled ribosomes mediated by trans-translation. Binds to transfer-messenger RNA (tmRNA), required for stable association of tmRNA with ribosomes. tmRNA and SmpB together mimic tRNA shape, replacing the anticodon stem-loop with SmpB. tmRNA is encoded by the ssrA gene; the 2 termini fold to resemble tRNA(Ala) and it encodes a 'tag peptide', a short internal open reading frame. During trans-translation Ala-aminoacylated tmRNA acts like a tRNA, entering the A-site of stalled ribosomes, displacing the stalled mRNA. The ribosome then switches to translate the ORF on the tmRNA; the nascent peptide is terminated with the 'tag peptide' encoded by the tmRNA and targeted for degradation. The ribosome is freed to recommence translation, which seems to be the essential function of trans-translation. This Prochlorococcus marinus (strain NATL1A) protein is SsrA-binding protein.